The sequence spans 512 residues: Altronate oxidoreductase (512 aa).

NAD(+) is bound at residue 26–37 (VLQFGEGNFLRG).

It belongs to the mannitol dehydrogenase family. UxaB subfamily.

The enzyme catalyses D-altronate + NAD(+) = keto-D-tagaturonate + NADH + H(+). It functions in the pathway carbohydrate metabolism; pentose and glucuronate interconversion. The polypeptide is Altronate oxidoreductase (Halalkalibacterium halodurans (strain ATCC BAA-125 / DSM 18197 / FERM 7344 / JCM 9153 / C-125) (Bacillus halodurans)).